The sequence spans 129 residues: L-ectoine synthase (129 aa).

The protein belongs to the ectoine synthase family.

The catalysed reaction is (2S)-4-acetamido-2-aminobutanoate = L-ectoine + H2O. It participates in amine and polyamine biosynthesis; ectoine biosynthesis; L-ectoine from L-aspartate 4-semialdehyde: step 3/3. Functionally, catalyzes the circularization of gamma-N-acetyl-alpha,gamma-diaminobutyric acid (ADABA) to ectoine (1,4,5,6-tetrahydro-2-methyl-4-pyrimidine carboxylic acid), which is an excellent osmoprotectant. This chain is L-ectoine synthase, found in Halalkalibacterium halodurans (strain ATCC BAA-125 / DSM 18197 / FERM 7344 / JCM 9153 / C-125) (Bacillus halodurans).